A 418-amino-acid chain; its full sequence is Light-independent protochlorophyllide reductase subunit N (418 aa).

3 residues coordinate [4Fe-4S] cluster: Cys17, Cys42, and Cys103.

The protein belongs to the BchN/ChlN family. In terms of assembly, protochlorophyllide reductase is composed of three subunits; ChlL, ChlN and ChlB. Forms a heterotetramer of two ChlB and two ChlN subunits. [4Fe-4S] cluster is required as a cofactor.

The enzyme catalyses chlorophyllide a + oxidized 2[4Fe-4S]-[ferredoxin] + 2 ADP + 2 phosphate = protochlorophyllide a + reduced 2[4Fe-4S]-[ferredoxin] + 2 ATP + 2 H2O. It participates in porphyrin-containing compound metabolism; chlorophyll biosynthesis (light-independent). In terms of biological role, component of the dark-operative protochlorophyllide reductase (DPOR) that uses Mg-ATP and reduced ferredoxin to reduce ring D of protochlorophyllide (Pchlide) to form chlorophyllide a (Chlide). This reaction is light-independent. The NB-protein (ChlN-ChlB) is the catalytic component of the complex. This is Light-independent protochlorophyllide reductase subunit N from Prochlorococcus marinus subsp. pastoris (strain CCMP1986 / NIES-2087 / MED4).